The sequence spans 116 residues: UPF0102 protein LA_2381 (116 aa).

Belongs to the UPF0102 family.

The chain is UPF0102 protein LA_2381 from Leptospira interrogans serogroup Icterohaemorrhagiae serovar Lai (strain 56601).